The following is a 221-amino-acid chain: Pyridoxine/pyridoxamine 5'-phosphate oxidase (221 aa).

Residues 14 to 17 (RNEY) and Lys-73 each bind substrate. FMN is bound by residues 68 to 73 (RTVLLK), 83 to 84 (FT), Lys-90, and Gln-112. Residues Tyr-130, Arg-134, and Ser-138 each contribute to the substrate site. FMN-binding positions include 147–148 (QS) and Trp-193. Residue 199–201 (RLH) participates in substrate binding. An FMN-binding site is contributed by Arg-203.

The protein belongs to the pyridoxamine 5'-phosphate oxidase family. Homodimer. Requires FMN as cofactor.

It catalyses the reaction pyridoxamine 5'-phosphate + O2 + H2O = pyridoxal 5'-phosphate + H2O2 + NH4(+). The catalysed reaction is pyridoxine 5'-phosphate + O2 = pyridoxal 5'-phosphate + H2O2. Its pathway is cofactor metabolism; pyridoxal 5'-phosphate salvage; pyridoxal 5'-phosphate from pyridoxamine 5'-phosphate: step 1/1. The protein operates within cofactor metabolism; pyridoxal 5'-phosphate salvage; pyridoxal 5'-phosphate from pyridoxine 5'-phosphate: step 1/1. Catalyzes the oxidation of either pyridoxine 5'-phosphate (PNP) or pyridoxamine 5'-phosphate (PMP) into pyridoxal 5'-phosphate (PLP). The polypeptide is Pyridoxine/pyridoxamine 5'-phosphate oxidase (Salinispora arenicola (strain CNS-205)).